The sequence spans 99 residues: Putative septation protein SpoVG (99 aa).

The protein belongs to the SpoVG family.

Could be involved in septation. This chain is Putative septation protein SpoVG, found in Myxococcus xanthus (strain DK1622).